The following is a 477-amino-acid chain: Bifunctional enzyme PyrF/PyrE (477 aa).

Residues 1–273 form an OMP decarboxylase region; sequence MIFFDKLHQN…ITVRDVASCS (273 aa). Lysine 96 serves as the catalytic Proton donor. Residues 274–477 are orotate phosphoribosyltransferase; sequence VWLPDVFTVK…DEQFLALTAE (204 aa). 5-phospho-alpha-D-ribose 1-diphosphate is bound by residues arginine 374, lysine 375, lysine 378, histidine 380, and 400 to 408; that span reads DDILISGKS.

This sequence in the N-terminal section; belongs to the OMP decarboxylase family. Type 2 subfamily. It in the C-terminal section; belongs to the purine/pyrimidine phosphoribosyltransferase family. Mg(2+) serves as cofactor.

The enzyme catalyses orotidine 5'-phosphate + H(+) = UMP + CO2. It catalyses the reaction orotidine 5'-phosphate + diphosphate = orotate + 5-phospho-alpha-D-ribose 1-diphosphate. It participates in pyrimidine metabolism; UMP biosynthesis via de novo pathway; UMP from orotate: step 1/2. It functions in the pathway pyrimidine metabolism; UMP biosynthesis via de novo pathway; UMP from orotate: step 2/2. In terms of biological role, catalyzes the transfer of a ribosyl phosphate group from 5-phosphoribose 1-diphosphate to orotate, leading to the formation of orotidine monophosphate (OMP). Catalyzes the decarboxylation of orotidine monophosphate (OMP) to uridine monophosphate (UMP). The chain is Bifunctional enzyme PyrF/PyrE (pyrFE) from Nostoc sp. (strain PCC 7120 / SAG 25.82 / UTEX 2576).